The sequence spans 154 residues: UPF0178 protein GDI0551/Gdia_1457 (154 aa).

Belongs to the UPF0178 family.

The protein is UPF0178 protein GDI0551/Gdia_1457 of Gluconacetobacter diazotrophicus (strain ATCC 49037 / DSM 5601 / CCUG 37298 / CIP 103539 / LMG 7603 / PAl5).